A 78-amino-acid chain; its full sequence is Large ribosomal subunit protein bL28 (78 aa).

It belongs to the bacterial ribosomal protein bL28 family.

This Flavobacterium psychrophilum (strain ATCC 49511 / DSM 21280 / CIP 103535 / JIP02/86) protein is Large ribosomal subunit protein bL28.